The sequence spans 628 residues: uncharacterized protein (628 aa).

2 disordered regions span residues 1–65 and 80–125; these read MDTN…ISSA and SLRN…VSLS. Residues 12 to 21 are compositionally biased toward low complexity; it reads ISPSIASSFP. Polar residues predominate over residues 25–37; the sequence is PFSSQNSTTSNPE. 2 stretches are compositionally biased toward low complexity: residues 48-64 and 87-102; these read SSIIISQQPLSPSNISS and SPHIPSPSSFSSSSSS. The segment covering 103–116 has biased composition (basic and acidic residues); that stretch reads DLDKSMLDEKHPDS. Transmembrane regions (helical) follow at residues 157–177, 203–223, 230–250, 259–279, 294–314, 324–344, 417–437, 454–474, 483–503, 511–531, 542–562, and 583–603; these read IITCLWITYFLSRSVTYSISL, VGTGLSYVSLIIFDLPSNLLM, LWLSRIQVTTGIIGACHAVLG, FIALRFFNGLAIAGMWPGFAF, IGWYYTAAQISSVATSLLSAA, LYGYQWMFLIWGVVAFTQGLF, LWPPIFMFFGVVGISNGLVNY, VSLLVAPIWVFDAIAILTVLP, MLFFVGSCLFVLAGLLITTFV, VGLLILGFGLGPTVPIIMTWV, VGVAAGLAIVSGLGNLGSVVA, and MCGMVGIAIVASIVMHMVQKF.

The protein belongs to the major facilitator superfamily. Allantoate permease family.

It is found in the membrane. This is an uncharacterized protein from Schizosaccharomyces pombe (strain 972 / ATCC 24843) (Fission yeast).